Reading from the N-terminus, the 112-residue chain is Integration host factor subunit alpha (112 aa).

Belongs to the bacterial histone-like protein family. Heterodimer of an alpha and a beta chain.

Functionally, this protein is one of the two subunits of integration host factor, a specific DNA-binding protein that functions in genetic recombination as well as in transcriptional and translational control. This chain is Integration host factor subunit alpha, found in Rhizobium rhizogenes (strain K84 / ATCC BAA-868) (Agrobacterium radiobacter).